The primary structure comprises 635 residues: Frizzled and smoothened-like protein C (635 aa).

The first 20 residues, 1–20 (MKFKLIIFIIIIYIIKILKS), serve as a signal peptide directing secretion. At 21 to 244 (EILNEFGYGL…NKWVQMYKMS (224 aa)) the chain is on the extracellular side. In terms of domain architecture, FZ spans 32–166 (DENLKCLSFI…LTKYGYTENN (135 aa)). 2 disulfide bridges follow: cysteine 37–cysteine 108 and cysteine 50–cysteine 101. Residues asparagine 65, asparagine 141, asparagine 156, asparagine 185, and asparagine 203 are each glycosylated (N-linked (GlcNAc...) asparagine). Residues 245-265 (IVLSTLSFICSIYNIITFGLL) traverse the membrane as a helical segment. Residues 266 to 275 (SKLKSKYNLC) are Cytoplasmic-facing. A helical membrane pass occupies residues 276 to 296 (ITFFSVSTVLMSLMDIVTYGI). Over 297 to 314 (GYEELLCPESGRYAIQSD) the chain is Extracellular. Residues 315-335 (VACGVTGAFFHIGITTGVLWW) traverse the membrane as a helical segment. Topologically, residues 336-356 (TTMSICLYSEVKRFKMISFRY) are cytoplasmic. Residues 357–377 (IIIFNSVISLILLIIPLSGQA) form a helical membrane-spanning segment. The Extracellular segment spans residues 378-398 (FMSGNGSLGCWIRKTWYANGT). Residues asparagine 382 and asparagine 396 are each glycosylated (N-linked (GlcNAc...) asparagine). The chain crosses the membrane as a helical span at residues 399–419 (FWIPCGISLFIGAICIVLVIY). Residues 420 to 440 (EIFKISRNLSKDNKPLMFQIR) are Cytoplasmic-facing. A helical transmembrane segment spans residues 441–461 (PFLCVLLVGGSFLYLFIFYFN). The Extracellular segment spans residues 462–496 (NERNLDKYKAAIPSYVQCLLSSDENGEDCLTDGPG). The helical transmembrane segment at 497-517 (FGAYFTFYFFTRLFGITSFSI) threads the bilayer. The Cytoplasmic portion of the chain corresponds to 518 to 635 (YGTSKIARDI…SSKDSNTNSF (118 aa)). Polar residues predominate over residues 559–594 (SISGSNQKRFNRNGSNFNMKQNKSNPNDSISLSVVE). The tract at residues 559 to 635 (SISGSNQKRF…SSKDSNTNSF (77 aa)) is disordered. A coiled-coil region spans residues 594–623 (ESTKKQDTENELESNIETKENRSTDISIEN). The segment covering 623–635 (NTTSSKDSNTNSF) has biased composition (low complexity).

The protein belongs to the G-protein coupled receptor Fz/Smo family.

The protein resides in the membrane. This chain is Frizzled and smoothened-like protein C (fslC), found in Dictyostelium discoideum (Social amoeba).